The primary structure comprises 331 residues: Adenosine deaminase (331 aa).

The Zn(2+) site is built by His-12 and His-14. Substrate contacts are provided by His-14, Asp-16, and Gly-170. His-197 is a Zn(2+) binding site. The active-site Proton donor is the Glu-200. Residue Asp-278 coordinates Zn(2+). Position 279 (Asp-279) interacts with substrate.

This sequence belongs to the metallo-dependent hydrolases superfamily. Adenosine and AMP deaminases family. Adenosine deaminase subfamily. The cofactor is Zn(2+).

The enzyme catalyses adenosine + H2O + H(+) = inosine + NH4(+). It carries out the reaction 2'-deoxyadenosine + H2O + H(+) = 2'-deoxyinosine + NH4(+). Catalyzes the hydrolytic deamination of adenosine and 2-deoxyadenosine. The chain is Adenosine deaminase from Shewanella sp. (strain ANA-3).